Here is a 144-residue protein sequence, read N- to C-terminus: Cytochrome c oxidase subunit 4 isoform 1, mitochondrial (144 aa).

The Mitochondrial matrix portion of the chain corresponds to 1–73 (SVVKSEDFSL…SFAEMNRGSN (73 aa)). Lys4 bears the N6-acetyllysine; alternate mark. Position 4 is an N6-succinyllysine; alternate (Lys4). Lys28 bears the N6-acetyllysine mark. Phosphoserine is present on residues Ser31 and Ser33. Lys35 bears the N6-acetyllysine; alternate mark. At Lys35 the chain carries N6-succinyllysine; alternate. Residue Lys42 is modified to N6-acetyllysine. The chain crosses the membrane as a helical span at residues 74–99 (EWKTVVGGAMFFIGFTALIIMWQKHY). Residues 100 to 144 (VYGPLPQTFDKEWVGKQTKRMLDMKVNPIQGLASKWDYEKNEWKK) lie on the Mitochondrial intermembrane side of the membrane.

This sequence belongs to the cytochrome c oxidase IV family. As to quaternary structure, component of the cytochrome c oxidase (complex IV, CIV), a multisubunit enzyme composed of 14 subunits. The complex is composed of a catalytic core of 3 subunits MT-CO1, MT-CO2 and MT-CO3, encoded in the mitochondrial DNA, and 11 supernumerary subunits COX4I, COX5A, COX5B, COX6A, COX6B, COX6C, COX7A, COX7B, COX7C, COX8 and NDUFA4, which are encoded in the nuclear genome. The complex exists as a monomer or a dimer and forms supercomplexes (SCs) in the inner mitochondrial membrane with NADH-ubiquinone oxidoreductase (complex I, CI) and ubiquinol-cytochrome c oxidoreductase (cytochrome b-c1 complex, complex III, CIII), resulting in different assemblies (supercomplex SCI(1)III(2)IV(1) and megacomplex MCI(2)III(2)IV(2)). Interacts with PHB2; the interaction decreases in absence of SPHK2. Interacts with AFG1L. Interacts with ABCB7; this interaction allows the regulation of cellular iron homeostasis and cellular reactive oxygen species (ROS) levels in cardiomyocytes. Interacts with FLVCR2; this interaction occurs in the absence of heme and is disrupted upon heme binding. Interacts with IRGC.

Its subcellular location is the mitochondrion inner membrane. It functions in the pathway energy metabolism; oxidative phosphorylation. Functionally, component of the cytochrome c oxidase, the last enzyme in the mitochondrial electron transport chain which drives oxidative phosphorylation. The respiratory chain contains 3 multisubunit complexes succinate dehydrogenase (complex II, CII), ubiquinol-cytochrome c oxidoreductase (cytochrome b-c1 complex, complex III, CIII) and cytochrome c oxidase (complex IV, CIV), that cooperate to transfer electrons derived from NADH and succinate to molecular oxygen, creating an electrochemical gradient over the inner membrane that drives transmembrane transport and the ATP synthase. Cytochrome c oxidase is the component of the respiratory chain that catalyzes the reduction of oxygen to water. Electrons originating from reduced cytochrome c in the intermembrane space (IMS) are transferred via the dinuclear copper A center (CU(A)) of subunit 2 and heme A of subunit 1 to the active site in subunit 1, a binuclear center (BNC) formed by heme A3 and copper B (CU(B)). The BNC reduces molecular oxygen to 2 water molecules using 4 electrons from cytochrome c in the IMS and 4 protons from the mitochondrial matrix. This is Cytochrome c oxidase subunit 4 isoform 1, mitochondrial (COX4I1) from Hylobates agilis (Agile gibbon).